A 424-amino-acid polypeptide reads, in one-letter code: Protein CapL (424 aa).

The protein belongs to the UDP-glucose/GDP-mannose dehydrogenase family.

The protein operates within capsule biogenesis; capsule polysaccharide biosynthesis. Required for the biosynthesis of type 1 capsular polysaccharide. The protein is Protein CapL (capL) of Staphylococcus aureus.